The primary structure comprises 200 residues: Thymidylate kinase (200 aa).

ATP is bound at residue 10–17; that stretch reads GIDGAGKS.

It belongs to the thymidylate kinase family.

It catalyses the reaction dTMP + ATP = dTDP + ADP. Its function is as follows. Phosphorylation of dTMP to form dTDP in both de novo and salvage pathways of dTTP synthesis. The chain is Thymidylate kinase from Cupriavidus metallidurans (strain ATCC 43123 / DSM 2839 / NBRC 102507 / CH34) (Ralstonia metallidurans).